The following is a 36-amino-acid chain: Esculentin-2R (36 aa).

Cys30 and Cys36 are joined by a disulfide.

As to expression, expressed by the skin glands.

It is found in the secreted. Its function is as follows. Antimicrobial peptide. This chain is Esculentin-2R, found in Pelophylax ridibundus (Marsh frog).